Here is a 99-residue protein sequence, read N- to C-terminus: Protein S100-A11 (99 aa).

Methionine 1 bears the N-acetylmethionine mark. A Phosphothreonine modification is found at threonine 8. 2 consecutive EF-hand domains span residues 10–47 and 53–88; these read RCIE…ELAA and KDPG…LAIA. Asparagine 29, lysine 31, glutamate 36, aspartate 66, aspartate 68, aspartate 70, glutamine 72, and glutamate 77 together coordinate Ca(2+).

The protein belongs to the S-100 family. In terms of assembly, homodimer; disulfide-linked. Post-translationally, phosphorylation at Thr-8 significantly suppresses homodimerization and promotes association with NCL/nucleolin which induces nuclear translocation.

It is found in the cytoplasm. The protein localises to the nucleus. Its function is as follows. Facilitates the differentiation and the cornification of keratinocytes. The sequence is that of Protein S100-A11 (S100A11) from Sus scrofa (Pig).